The following is a 607-amino-acid chain: WD repeat-containing protein 1-A (607 aa).

WD repeat units lie at residues 4-45 (ELKK…IRNI), 48-87 (PAIA…IWDT), 93-135 (LLKY…LWDT), 138-176 (SVGE…FLEG), 180-218 (KFKF…LYDG), 224-263 (VCSL…IWDV), 270-306 (TTFN…YLDK), 311-351 (RPLR…YWDA), 358-408 (TFTG…KMDV), 432-474 (LKDK…LYSI), 480-518 (KDEG…VFSV), 523-561 (SEKN…VWTL), and 566-604 (TRIK…QWTV).

Belongs to the WD repeat AIP1 family.

It localises to the cell membrane. The protein localises to the cytoplasm. Its subcellular location is the cytoskeleton. The protein resides in the nucleus. Its function is as follows. Induces disassembly of actin filaments in conjunction with ADF/cofilin family proteins. Doesn't sever actin filaments alone, but caps the barbed ends of filaments severed by cofilin, which blocks annealing and depolymerization and allows more extensive severing by cofilin. The protein is WD repeat-containing protein 1-A (wdr1-a) of Xenopus laevis (African clawed frog).